Here is a 203-residue protein sequence, read N- to C-terminus: Inosine triphosphate pyrophosphatase (203 aa).

Residue Thr13–Lys18 coordinates ITP. Residue Glu43 participates in Mg(2+) binding. Residues Lys55, Asp71–Thr72, Lys88, Phe147–Asp150, Lys170, and His175–Arg176 each bind ITP.

It belongs to the HAM1 NTPase family. As to quaternary structure, homodimer. Mg(2+) serves as cofactor. It depends on Mn(2+) as a cofactor.

The protein localises to the cytoplasm. The catalysed reaction is ITP + H2O = IMP + diphosphate + H(+). It carries out the reaction dITP + H2O = dIMP + diphosphate + H(+). The enzyme catalyses XTP + H2O = XMP + diphosphate + H(+). It catalyses the reaction N(6)-hydroxy-dATP + H2O = N(6)-hydroxy-dAMP + diphosphate + H(+). Pyrophosphatase that hydrolyzes the non-canonical purine nucleotides inosine triphosphate (ITP), deoxyinosine triphosphate (dITP) as well as 2'-deoxy-N-6-hydroxylaminopurine triphosphate (dHAPTP) and xanthosine 5'-triphosphate (XTP) to their respective monophosphate derivatives. The enzyme does not distinguish between the deoxy- and ribose forms. Probably excludes non-canonical purines from RNA and DNA precursor pools, thus preventing their incorporation into RNA and DNA and avoiding chromosomal lesions. In Danio rerio (Zebrafish), this protein is Inosine triphosphate pyrophosphatase (itpa).